Consider the following 377-residue polypeptide: MAKSHLLQWLLLLPTLCCPGAAITSASSLECAQGPQFWCQSLEHAVQCRALGHCLQEVWGHAGANDLCQECEDIVHLLTKMTKEDAFQEAIRKFLEQECDILPLKLLVPRCRQVLDVYLPLVIDYFQSQINPKAICNHVGLCPRGQAKPEQNPGMPDAVPNPLLDKLVLPVLPGALLARPGPHTQDFSEQQLPIPLPFCWLCRTLIKRVQAVIPKGVLAVAVSQVCHVVPLVVGGICQCLAERYTVLLLDALLGRVVPQLVCGLVLRCSTEDAMGPALPAVEPLIEEWPLQDTECHFCKSVINQAWNTSEQAMPQAMHQACLRFWLDRQKCEQFVEQHMPQLLALVPRSQDAHITCQALGVCEAPASPLQCFQTPHL.

An N-terminal signal peptide occupies residues 1–22 (MAKSHLLQWLLLLPTLCCPGAA). A propeptide spanning residues 23-191 (ITSASSLECA…PHTQDFSEQQ (169 aa)) is cleaved from the precursor. Residues 24 to 64 (TSASSLECAQGPQFWCQSLEHAVQCRALGHCLQEVWGHAGA) enclose the Saposin A-type domain. Saposin B-type domains lie at 64 to 146 (ANDL…PRGQ), 195 to 272 (PLPF…STED), and 291 to 366 (QDTE…EAPA). 9 disulfides stabilise this stretch: cysteine 68–cysteine 142, cysteine 71–cysteine 136, cysteine 99–cysteine 111, cysteine 199–cysteine 268, cysteine 202–cysteine 262, cysteine 226–cysteine 237, cysteine 295–cysteine 362, cysteine 298–cysteine 356, and cysteine 321–cysteine 331. A propeptide spanning residues 271-377 (EDAMGPALPA…PLQCFQTPHL (107 aa)) is cleaved from the precursor. The N-linked (GlcNAc...) asparagine glycan is linked to asparagine 307.

Homodimer; disulfide-linked.

The protein resides in the secreted. It is found in the extracellular space. It localises to the surface film. Functionally, pulmonary surfactant-associated proteins promote alveolar stability by lowering the surface tension at the air-liquid interface in the peripheral air spaces. SP-B increases the collapse pressure of palmitic acid to nearly 70 millinewtons per meter. The protein is Pulmonary surfactant-associated protein B (Sftpb) of Mus musculus (Mouse).